We begin with the raw amino-acid sequence, 37 residues long: Small ribosomal subunit protein eS32 (37 aa).

This sequence belongs to the eukaryotic ribosomal protein eS32 family. Part of the small ribosomal subunit.

Functionally, interacts with N(4)-acetylcytidine (ac(4)C) 1459 of the small rRNA; the acetyl group of ac(4)C1459 briges the interaction with this protein. The polypeptide is Small ribosomal subunit protein eS32 (rpl41e) (Thermococcus kodakarensis (strain ATCC BAA-918 / JCM 12380 / KOD1) (Pyrococcus kodakaraensis (strain KOD1))).